Here is a 259-residue protein sequence, read N- to C-terminus: Type-2Aa cytolytic delta-endotoxin (259 aa).

The protein belongs to the cyt1/cyt2 endotoxin family. Homodimer (protoxin) and monomer (active toxin). Post-translationally, active after proteolytic processing.

Its function is as follows. Kills the larvae of dipteran insects by making pores in the epithelial cell membrane of the insect midgut. The protein is Type-2Aa cytolytic delta-endotoxin (cyt2Aa1) of Bacillus thuringiensis subsp. kyushuensis.